A 115-amino-acid chain; its full sequence is Large ribosomal subunit protein uL18 (115 aa).

The disordered stretch occupies residues Met1–Val20. A compositionally biased stretch (basic residues) spans Ala8–Ser18.

This sequence belongs to the universal ribosomal protein uL18 family. In terms of assembly, part of the 50S ribosomal subunit; part of the 5S rRNA/L5/L18/L25 subcomplex. Contacts the 5S and 23S rRNAs.

In terms of biological role, this is one of the proteins that bind and probably mediate the attachment of the 5S RNA into the large ribosomal subunit, where it forms part of the central protuberance. This Mesoplasma florum (strain ATCC 33453 / NBRC 100688 / NCTC 11704 / L1) (Acholeplasma florum) protein is Large ribosomal subunit protein uL18.